The primary structure comprises 406 residues: Argininosuccinate synthase (406 aa).

9 to 17 provides a ligand contact to ATP; that stretch reads AYSGGLDTS. Tyrosine 86 lines the L-citrulline pocket. Glycine 116 serves as a coordination point for ATP. L-aspartate-binding residues include threonine 118, asparagine 122, and aspartate 123. Asparagine 122 is an L-citrulline binding site. Positions 126, 174, 183, 259, and 271 each coordinate L-citrulline.

The protein belongs to the argininosuccinate synthase family. Type 1 subfamily. As to quaternary structure, homotetramer.

It localises to the cytoplasm. It catalyses the reaction L-citrulline + L-aspartate + ATP = 2-(N(omega)-L-arginino)succinate + AMP + diphosphate + H(+). It functions in the pathway amino-acid biosynthesis; L-arginine biosynthesis; L-arginine from L-ornithine and carbamoyl phosphate: step 2/3. The polypeptide is Argininosuccinate synthase (Geobacillus kaustophilus (strain HTA426)).